The following is a 663-amino-acid chain: Terreic acid cluster-specific transcription factor atF (663 aa).

Over residues 1 to 20 the composition is skewed to polar residues; the sequence is MFATFNSSMDNRSSANSPVA. 2 disordered regions span residues 1–28 and 55–126; these read MFAT…PKRT and TRGV…SPSQ. The segment at residues 34-60 is a DNA-binding region (zn(2)-C6 fungal-type); that stretch reads CDWCRLNRVKCDDGQPCKNCRTRGVRC. Residues 55–64 are compositionally biased toward basic residues; the sequence is TRGVRCRKGS. Low complexity-rich tracts occupy residues 73–88 and 105–125; these read SSSA…QGAQ and ATTS…PSPS.

Its subcellular location is the nucleus. Its function is as follows. Transcription factor that regulates the expression of the gene cluster that mediates the biosynthesis of terreic acid, a quinone epoxide inhibitor of Bruton's tyrosine kinase. The chain is Terreic acid cluster-specific transcription factor atF from Aspergillus terreus (strain NIH 2624 / FGSC A1156).